The sequence spans 460 residues: Probable Xaa-Pro aminopeptidase VDBG_02538 (460 aa).

Mn(2+)-binding residues include aspartate 256, aspartate 267, glutamate 390, and glutamate 430.

It belongs to the peptidase M24B family. It depends on Mn(2+) as a cofactor.

It catalyses the reaction Release of any N-terminal amino acid, including proline, that is linked to proline, even from a dipeptide or tripeptide.. Catalyzes the removal of a penultimate prolyl residue from the N-termini of peptides. This Verticillium alfalfae (strain VaMs.102 / ATCC MYA-4576 / FGSC 10136) (Verticillium wilt of alfalfa) protein is Probable Xaa-Pro aminopeptidase VDBG_02538.